A 188-amino-acid chain; its full sequence is Cytidylate kinase (188 aa).

7–15 (GKIGSGKST) is a binding site for ATP.

This sequence belongs to the cytidylate kinase family. Type 2 subfamily.

Its subcellular location is the cytoplasm. It catalyses the reaction CMP + ATP = CDP + ADP. The enzyme catalyses dCMP + ATP = dCDP + ADP. In Thermoplasma acidophilum (strain ATCC 25905 / DSM 1728 / JCM 9062 / NBRC 15155 / AMRC-C165), this protein is Cytidylate kinase (cmk).